The sequence spans 349 residues: MAENAYSKAGVDVEAGYQVVERIKKHVARTERLGAMGALGSFGGMFDLSSLHLKEPVLVSGTDGVGTKLLLAIEADKHDTIGIDCVAMCVNDILAQGAEPLFFLDYIATGKTDPVKMEQIVKGVADGCEQAGAALIGGETAEMPDMYGSDDYDLAGFTVGAVEKQKLITEGAVKEGDTLIGIPSSGIHSNGYSLVRKIFFKDNELTLDAEISELDVPLVEELLKPTRIYVKPVLEVLKEVDVHGITHVTGGGFVENLPRMLTNDLAVKVELGSWPVLPIFDVMKKYGQLNEMEMYEIFNMGIGMVLAVAKADVERTLEVLVQNGEAAYVIGEVTTRENDAVIFTGGTKG.

This sequence belongs to the AIR synthase family.

The protein localises to the cytoplasm. It carries out the reaction 2-formamido-N(1)-(5-O-phospho-beta-D-ribosyl)acetamidine + ATP = 5-amino-1-(5-phospho-beta-D-ribosyl)imidazole + ADP + phosphate + H(+). It participates in purine metabolism; IMP biosynthesis via de novo pathway; 5-amino-1-(5-phospho-D-ribosyl)imidazole from N(2)-formyl-N(1)-(5-phospho-D-ribosyl)glycinamide: step 2/2. The sequence is that of Phosphoribosylformylglycinamidine cyclo-ligase from Listeria monocytogenes serotype 4a (strain HCC23).